We begin with the raw amino-acid sequence, 267 residues long: tRNA pseudouridine synthase A (267 aa).

The Nucleophile role is filled by D53. Position 114 (Y114) interacts with substrate.

The protein belongs to the tRNA pseudouridine synthase TruA family. As to quaternary structure, homodimer.

It catalyses the reaction uridine(38/39/40) in tRNA = pseudouridine(38/39/40) in tRNA. In terms of biological role, formation of pseudouridine at positions 38, 39 and 40 in the anticodon stem and loop of transfer RNAs. This chain is tRNA pseudouridine synthase A, found in Chlamydia trachomatis serovar A (strain ATCC VR-571B / DSM 19440 / HAR-13).